Here is a 149-residue protein sequence, read N- to C-terminus: Nucleoside diphosphate kinase (149 aa).

ATP-binding residues include K9, F57, R85, T91, R102, and N112. Catalysis depends on H115, which acts as the Pros-phosphohistidine intermediate.

This sequence belongs to the NDK family. As to quaternary structure, homotetramer. Requires Mg(2+) as cofactor.

It is found in the cytoplasm. The catalysed reaction is a 2'-deoxyribonucleoside 5'-diphosphate + ATP = a 2'-deoxyribonucleoside 5'-triphosphate + ADP. It catalyses the reaction a ribonucleoside 5'-diphosphate + ATP = a ribonucleoside 5'-triphosphate + ADP. Its function is as follows. Major role in the synthesis of nucleoside triphosphates other than ATP. The ATP gamma phosphate is transferred to the NDP beta phosphate via a ping-pong mechanism, using a phosphorylated active-site intermediate. The polypeptide is Nucleoside diphosphate kinase (Staphylococcus aureus (strain Mu3 / ATCC 700698)).